The following is a 421-amino-acid chain: 4-aminobutyrate aminotransferase PuuE (421 aa).

Pyridoxal 5'-phosphate contacts are provided by residues 110–111 (GA) and 238–241 (DEVQ). Lysine 267 bears the N6-(pyridoxal phosphate)lysine mark. Threonine 296 contacts pyridoxal 5'-phosphate.

This sequence belongs to the class-III pyridoxal-phosphate-dependent aminotransferase family. Pyridoxal 5'-phosphate is required as a cofactor.

The catalysed reaction is 4-aminobutanoate + 2-oxoglutarate = succinate semialdehyde + L-glutamate. The protein operates within amine and polyamine degradation; putrescine degradation; succinate semialdehyde from 4-aminobutanoate. Completely inhibited by succinate and low-aeration conditions. Its function is as follows. Catalyzes the transfer of the amino group from gamma-aminobutyrate (GABA) to alpha-ketoglutarate (KG) to yield succinic semialdehyde (SSA). PuuE is important for utilization of putrescine as the sole nitrogen or carbon source. This Escherichia coli (strain K12) protein is 4-aminobutyrate aminotransferase PuuE (puuE).